Reading from the N-terminus, the 172-residue chain is Ribosome maturation factor RimM (172 aa).

Residues 95-168 (AEGEFYYHQI…RVDVEIMEGL (74 aa)) enclose the PRC barrel domain.

Belongs to the RimM family. In terms of assembly, binds ribosomal protein uS19.

It localises to the cytoplasm. Functionally, an accessory protein needed during the final step in the assembly of 30S ribosomal subunit, possibly for assembly of the head region. Essential for efficient processing of 16S rRNA. May be needed both before and after RbfA during the maturation of 16S rRNA. It has affinity for free ribosomal 30S subunits but not for 70S ribosomes. In Streptococcus equi subsp. zooepidemicus (strain H70), this protein is Ribosome maturation factor RimM.